The sequence spans 259 residues: Cell division protein FtsQ (259 aa).

At 1-15 (MTRDQTATFGRHALR) the chain is on the cytoplasmic side. The helical transmembrane segment at 16–36 (VAGSGLLVAGVVALGLLGWQW) threads the bilayer. Residues 37–259 (RANVTVDRVA…VVTRTRPLDG (223 aa)) are Periplasmic-facing. Positions 40-109 (VTVDRVAVTG…GALTISVTER (70 aa)) constitute a POTRA domain.

The protein belongs to the FtsQ/DivIB family. FtsQ subfamily.

Its subcellular location is the cell inner membrane. Functionally, essential cell division protein. This chain is Cell division protein FtsQ, found in Salinibacter ruber (strain DSM 13855 / M31).